We begin with the raw amino-acid sequence, 72 residues long: UPF0154 protein BPUM_1692 (72 aa).

The helical transmembrane segment at 4 to 24 (WVVILVGVVALLAGVALGFFI) threads the bilayer.

Belongs to the UPF0154 family.

It localises to the cell membrane. The sequence is that of UPF0154 protein BPUM_1692 from Bacillus pumilus (strain SAFR-032).